A 347-amino-acid polypeptide reads, in one-letter code: uncharacterized protein (347 aa).

This is an uncharacterized protein from Caenorhabditis elegans.